We begin with the raw amino-acid sequence, 215 residues long: E3 ubiquitin-protein ligase znrf1 (215 aa).

Disordered regions lie at residues 1–39 and 66–96; these read MGGKQSTAGRPRGAFPGVSTDDSAVPPSAHFGHYRPGGT and YTPRGTDSDRAGGGSGSDPAHNGNGYQETGG. Gly2 carries N-myristoyl glycine lipidation. The RING-type; atypical zinc finger occupies 172–213; the sequence is CVICLEELQQGDTIARLPCLCIYHKSCIDSWFEINRSCPEHP.

It is found in the endosome. The protein resides in the lysosome. The protein localises to the membrane. The enzyme catalyses S-ubiquitinyl-[E2 ubiquitin-conjugating enzyme]-L-cysteine + [acceptor protein]-L-lysine = [E2 ubiquitin-conjugating enzyme]-L-cysteine + N(6)-ubiquitinyl-[acceptor protein]-L-lysine.. It functions in the pathway protein modification; protein ubiquitination. Its function is as follows. E3 ubiquitin-protein ligase that plays a role in neuron cells differentiation. Plays a role in the establishment and maintenance of neuronal transmission and plasticity. This is E3 ubiquitin-protein ligase znrf1 (znrf1) from Danio rerio (Zebrafish).